Reading from the N-terminus, the 105-residue chain is MTTLQQQKIRIRLKAFDHRLLDTSCDKIVETAKRTNASPVGPIPLPTRRRIYCVLRSPHVDKDSREHFETRTHRRIVDIYQPSPKTIDALMKLDLPAGVDIEVKL.

It belongs to the universal ribosomal protein uS10 family. In terms of assembly, part of the 30S ribosomal subunit.

Functionally, involved in the binding of tRNA to the ribosomes. This is Small ribosomal subunit protein uS10 from Acaryochloris marina (strain MBIC 11017).